Consider the following 394-residue polypeptide: 8-amino-7-oxononanoate synthase (394 aa).

Position 21 (Arg21) interacts with substrate. 112–113 (GY) provides a ligand contact to pyridoxal 5'-phosphate. His137 serves as a coordination point for substrate. Residues Ser183, His211, and Thr239 each contribute to the pyridoxal 5'-phosphate site. At Lys242 the chain carries N6-(pyridoxal phosphate)lysine. Thr358 contributes to the substrate binding site.

Belongs to the class-II pyridoxal-phosphate-dependent aminotransferase family. BioF subfamily. Homodimer. It depends on pyridoxal 5'-phosphate as a cofactor.

The enzyme catalyses 6-carboxyhexanoyl-[ACP] + L-alanine + H(+) = (8S)-8-amino-7-oxononanoate + holo-[ACP] + CO2. It participates in cofactor biosynthesis; biotin biosynthesis. In terms of biological role, catalyzes the decarboxylative condensation of pimeloyl-[acyl-carrier protein] and L-alanine to produce 8-amino-7-oxononanoate (AON), [acyl-carrier protein], and carbon dioxide. This is 8-amino-7-oxononanoate synthase from Paraburkholderia xenovorans (strain LB400).